We begin with the raw amino-acid sequence, 108 residues long: Replication restart protein PriB (108 aa).

The 101-residue stretch at 8-108 (IDNRFSVMGV…LHAEQIEFID (101 aa)) folds into the SSB domain.

Belongs to the PriB family. Homodimer. Interacts with PriA and DnaT. Component of the replication restart primosome. Primosome assembly occurs via a 'hand-off' mechanism. PriA binds to replication forks, subsequently PriB then DnaT bind; DnaT then displaces ssDNA to generate the helicase loading substrate.

Involved in the restart of stalled replication forks, which reloads the replicative helicase on sites other than the origin of replication; the PriA-PriB pathway is the major replication restart pathway. During primosome assembly it facilitates complex formation between PriA and DnaT on DNA; stabilizes PriA on DNA. Stimulates the DNA unwinding activity of PriA helicase. The sequence is that of Replication restart protein PriB from Haemophilus influenzae (strain 86-028NP).